Here is a 205-residue protein sequence, read N- to C-terminus: Large ribosomal subunit protein uL3 (205 aa).

This sequence belongs to the universal ribosomal protein uL3 family. As to quaternary structure, part of the 50S ribosomal subunit. Forms a cluster with proteins L14 and L19.

One of the primary rRNA binding proteins, it binds directly near the 3'-end of the 23S rRNA, where it nucleates assembly of the 50S subunit. In Porphyromonas gingivalis (strain ATCC 33277 / DSM 20709 / CIP 103683 / JCM 12257 / NCTC 11834 / 2561), this protein is Large ribosomal subunit protein uL3.